The following is a 1209-amino-acid chain: Pre-mRNA-splicing factor rse1 (1209 aa).

Belongs to the RSE1 family. As to quaternary structure, associated with the spliceosome.

Its subcellular location is the nucleus. Involved in pre-mRNA splicing and cell cycle control. The chain is Pre-mRNA-splicing factor rse1 (msp-5) from Neurospora crassa (strain ATCC 24698 / 74-OR23-1A / CBS 708.71 / DSM 1257 / FGSC 987).